Here is a 306-residue protein sequence, read N- to C-terminus: Methyl-CpG-binding domain-containing protein 7 (306 aa).

Over residues 1–11 (MQTRSSSSPSA) the composition is skewed to polar residues. Residues 1-21 (MQTRSSSSPSANHRRETQLQI) are disordered. 3 consecutive MBD domains span residues 21 to 92 (IADP…QDKT), 106 to 171 (GVEY…RVLQ), and 172 to 242 (NRRG…ERLP). 3 positions are modified to asymmetric dimethylarginine: R118, R145, and R174. Positions 163-306 (IEQQLRVLQN…AFVSLIEDRS (144 aa)) are required for interaction with PRMT11.

In terms of assembly, interacts with PRMT11. Interacts (via C-terminus) with IDM2, but not with IDM1. Interacts with IDM3. Part of a complex made of MBD7, IDM1, IDM2 and IDM3. In terms of processing, methylated by PRMT11. In terms of tissue distribution, expressed in leaves, buds, flowers, stems, siliques, mature seeds and roots.

It localises to the nucleus. Its subcellular location is the chromosome. In terms of biological role, transcriptional regulator that binds CpG islands in promoters where the DNA is methylated at position 5 of cytosine within CpG dinucleotides. May directly affect chromatin structure by inducing intra- and inter- chromatin compaction via bridging over multiple methylated CpG sites. Acts as an anti-silencing factor that prevents DNA hypermethylation and gene repression. Requires high mCG density for binding. Recognizes preferentially mCGs located in transposable elements. Required for active DNA demethylation. Prefers to target genomic loci around chromocenters. This chain is Methyl-CpG-binding domain-containing protein 7, found in Arabidopsis thaliana (Mouse-ear cress).